A 265-amino-acid chain; its full sequence is MIESQRHSYHLVDPSPWPISGSLGALATTVGGVMYMHPFQGGATLLSLGLIFLLYTMFVWWRDVLRESTLEGHHTKVVQLGLRYGSILFIVSEVMFLFAFFWASSHSSLAPTVEIGGIWPPKGIGVLDPWEIPFLNTPILLSSGAAVTWAHHAILAGKEKRAVYALVATVSLAIVFTGFQGMEYYQAPPTISDSIYGSTFYLATGFHGFHVIIGTLFSIICGIRQYLGHLTKEHHVGFEAAAWYWHFVDVVRLFLFVSIYWWGGI.

Transmembrane regions (helical) follow at residues 16 to 36 (PWPI…VMYM), 41 to 61 (GGAT…FVWW), 84 to 104 (YGSI…FWAS), 137 to 157 (TPIL…ILAG), 162 to 182 (AVYA…FQGM), 200 to 220 (FYLA…FSII), and 245 to 265 (WHFV…WGGI).

The protein belongs to the cytochrome c oxidase subunit 3 family. As to quaternary structure, component of the cytochrome c oxidase (complex IV, CIV), a multisubunit enzyme composed of a catalytic core of 3 subunits and several supernumerary subunits. The complex exists as a monomer or a dimer and forms supercomplexes (SCs) in the inner mitochondrial membrane with ubiquinol-cytochrome c oxidoreductase (cytochrome b-c1 complex, complex III, CIII).

It is found in the mitochondrion inner membrane. It carries out the reaction 4 Fe(II)-[cytochrome c] + O2 + 8 H(+)(in) = 4 Fe(III)-[cytochrome c] + 2 H2O + 4 H(+)(out). Its function is as follows. Component of the cytochrome c oxidase, the last enzyme in the mitochondrial electron transport chain which drives oxidative phosphorylation. The respiratory chain contains 3 multisubunit complexes succinate dehydrogenase (complex II, CII), ubiquinol-cytochrome c oxidoreductase (cytochrome b-c1 complex, complex III, CIII) and cytochrome c oxidase (complex IV, CIV), that cooperate to transfer electrons derived from NADH and succinate to molecular oxygen, creating an electrochemical gradient over the inner membrane that drives transmembrane transport and the ATP synthase. Cytochrome c oxidase is the component of the respiratory chain that catalyzes the reduction of oxygen to water. Electrons originating from reduced cytochrome c in the intermembrane space (IMS) are transferred via the dinuclear copper A center (CU(A)) of subunit 2 and heme A of subunit 1 to the active site in subunit 1, a binuclear center (BNC) formed by heme A3 and copper B (CU(B)). The BNC reduces molecular oxygen to 2 water molecules using 4 electrons from cytochrome c in the IMS and 4 protons from the mitochondrial matrix. The chain is Cytochrome c oxidase subunit 3 (COX3) from Oenothera berteroana (Bertero's evening primrose).